Consider the following 63-residue polypeptide: Crotasin (63 aa).

Positions 1–22 (MKILYLLSAFLFLAFLSESGNA) are cleaved as a signal peptide. 3 cysteine pairs are disulfide-bonded: C26-C56, C33-C50, and C38-C57.

As to expression, highly expressed in pancreas, heart, liver, brain and kidney. Expressed to a low extent in the venom gland.

It localises to the secreted. This is Crotasin from Crotalus durissus terrificus (South American rattlesnake).